The primary structure comprises 246 residues: Bis(5'-nucleosyl)-tetraphosphatase PrpE [asymmetrical] (246 aa).

The protein belongs to the PrpE family. It depends on Ni(2+) as a cofactor.

The catalysed reaction is P(1),P(4)-bis(5'-guanosyl) tetraphosphate + H2O = GMP + GTP + 2 H(+). Asymmetrically hydrolyzes Ap4p to yield AMP and ATP. The polypeptide is Bis(5'-nucleosyl)-tetraphosphatase PrpE [asymmetrical] (Bacillus cereus (strain ATCC 10987 / NRS 248)).